A 270-amino-acid chain; its full sequence is Putative pyruvate, phosphate dikinase regulatory protein (270 aa).

148-155 (GISRTSKT) provides a ligand contact to ADP.

This sequence belongs to the pyruvate, phosphate/water dikinase regulatory protein family. PDRP subfamily.

The enzyme catalyses N(tele)-phospho-L-histidyl/L-threonyl-[pyruvate, phosphate dikinase] + ADP = N(tele)-phospho-L-histidyl/O-phospho-L-threonyl-[pyruvate, phosphate dikinase] + AMP + H(+). It catalyses the reaction N(tele)-phospho-L-histidyl/O-phospho-L-threonyl-[pyruvate, phosphate dikinase] + phosphate + H(+) = N(tele)-phospho-L-histidyl/L-threonyl-[pyruvate, phosphate dikinase] + diphosphate. Its function is as follows. Bifunctional serine/threonine kinase and phosphorylase involved in the regulation of the pyruvate, phosphate dikinase (PPDK) by catalyzing its phosphorylation/dephosphorylation. The chain is Putative pyruvate, phosphate dikinase regulatory protein from Bacillus cereus (strain 03BB102).